Reading from the N-terminus, the 130-residue chain is uncharacterized protein (130 aa).

Positions Met-1–Ser-19 are cleaved as a signal peptide.

The protein localises to the secreted. This is an uncharacterized protein from Homo sapiens (Human).